A 162-amino-acid polypeptide reads, in one-letter code: UPF0102 protein Bpet0439 (162 aa).

Residues 15 to 52 (QAQQRQMKRRRAAAHRAARGPAPARAPRASPTQRTGTA) are disordered. Over residues 20–32 (QMKRRRAAAHRAA) the composition is skewed to basic residues. Residues 33–48 (RGPAPARAPRASPTQR) show a composition bias toward low complexity.

The protein belongs to the UPF0102 family.

In Bordetella petrii (strain ATCC BAA-461 / DSM 12804 / CCUG 43448), this protein is UPF0102 protein Bpet0439.